Reading from the N-terminus, the 394-residue chain is Bifunctional enzyme IspD/IspF (394 aa).

The 2-C-methyl-D-erythritol 4-phosphate cytidylyltransferase stretch occupies residues 1–230 (MADTLAIVVA…AEALLGGGPV (230 aa)). Residues 231–394 (LVGFGYDVHR…RIVLPGDRVL (164 aa)) form a 2-C-methyl-D-erythritol 2,4-cyclodiphosphate synthase region. A divalent metal cation contacts are provided by aspartate 237 and histidine 239. 4-CDP-2-C-methyl-D-erythritol 2-phosphate-binding positions include 237-239 (DVH) and 263-264 (HS). Histidine 271 serves as a coordination point for a divalent metal cation. Residues 285–287 (DIG), 290–294 (FPDDD), 361–364 (TTTE), and phenylalanine 368 each bind 4-CDP-2-C-methyl-D-erythritol 2-phosphate.

In the N-terminal section; belongs to the IspD/TarI cytidylyltransferase family. IspD subfamily. This sequence in the C-terminal section; belongs to the IspF family. Requires a divalent metal cation as cofactor.

The enzyme catalyses 2-C-methyl-D-erythritol 4-phosphate + CTP + H(+) = 4-CDP-2-C-methyl-D-erythritol + diphosphate. It carries out the reaction 4-CDP-2-C-methyl-D-erythritol 2-phosphate = 2-C-methyl-D-erythritol 2,4-cyclic diphosphate + CMP. It participates in isoprenoid biosynthesis; isopentenyl diphosphate biosynthesis via DXP pathway; isopentenyl diphosphate from 1-deoxy-D-xylulose 5-phosphate: step 2/6. It functions in the pathway isoprenoid biosynthesis; isopentenyl diphosphate biosynthesis via DXP pathway; isopentenyl diphosphate from 1-deoxy-D-xylulose 5-phosphate: step 4/6. Functionally, bifunctional enzyme that catalyzes the formation of 4-diphosphocytidyl-2-C-methyl-D-erythritol from CTP and 2-C-methyl-D-erythritol 4-phosphate (MEP) (IspD), and catalyzes the conversion of 4-diphosphocytidyl-2-C-methyl-D-erythritol 2-phosphate (CDP-ME2P) to 2-C-methyl-D-erythritol 2,4-cyclodiphosphate (ME-CPP) with a corresponding release of cytidine 5-monophosphate (CMP) (IspF). The sequence is that of Bifunctional enzyme IspD/IspF from Desulforudis audaxviator (strain MP104C).